A 152-amino-acid chain; its full sequence is MFRGASSLSLDDKGRFAVPTKYRDDLLSEDQGTVICTVALNEPCLWLYPLAQWQEIESRLAKISNMNPRARRMQRMLLGNATEYQLDKNGRILLAPSLRAHADLGKKIMLVGLMNKFEIWDEARWHQQMRQDTELERLGDFEPHPDLDNFTL.

SpoVT-AbrB domains follow at residues 5-52 (ASSL…PLAQ) and 81-124 (ATEY…DEAR).

Belongs to the MraZ family. In terms of assembly, forms oligomers.

It is found in the cytoplasm. The protein resides in the nucleoid. The protein is Transcriptional regulator MraZ of Pseudoalteromonas translucida (strain TAC 125).